Consider the following 328-residue polypeptide: Ferredoxin--NADP reductase 1 (328 aa).

Residues aspartate 28, glutamine 36, tyrosine 41, alanine 81, isoleucine 116, aspartate 277, and serine 320 each contribute to the FAD site.

It belongs to the ferredoxin--NADP reductase type 2 family. As to quaternary structure, homodimer. FAD is required as a cofactor.

The catalysed reaction is 2 reduced [2Fe-2S]-[ferredoxin] + NADP(+) + H(+) = 2 oxidized [2Fe-2S]-[ferredoxin] + NADPH. In Sulfolobus acidocaldarius (strain ATCC 33909 / DSM 639 / JCM 8929 / NBRC 15157 / NCIMB 11770), this protein is Ferredoxin--NADP reductase 1.